A 464-amino-acid chain; its full sequence is Protein FAM90A15 (464 aa).

Disordered stretches follow at residues 1 to 42 (MMAR…DPRL), 70 to 389 (PATL…HDGA), and 415 to 437 (HSPEKPGAFLAQSPHVSEKSEAP). Basic and acidic residues-rich tracts occupy residues 74–89 (GKKEGKENLKPWKPRV) and 97–114 (NKDKGEKEERPRQQDPQR). Residues 180 to 197 (LASLSPLRKASLSSSSSL) show a composition bias toward low complexity.

The protein belongs to the FAM90 family.

This is Protein FAM90A15 from Homo sapiens (Human).